The chain runs to 225 residues: Cytochrome c oxidase subunit 2 (225 aa).

Residues 1 to 25 lie on the Mitochondrial intermembrane side of the membrane; sequence MSTWMMFMFQESNSFYADNLVSFHN. Residues 26–47 form a helical membrane-spanning segment; the sequence is LVMMIIIMISTLTIYIIFDLFM. Residues 48 to 62 are Mitochondrial matrix-facing; the sequence is NKFSNLFLLKNHNIE. The helical transmembrane segment at 63 to 82 threads the bilayer; sequence IIWTIVPIVILLIICFPSLK. The Mitochondrial intermembrane segment spans residues 83 to 225; that stretch reads ILYLIDEIIN…FFLNWINKQN (143 aa). Cu cation contacts are provided by histidine 159, cysteine 194, glutamate 196, cysteine 198, histidine 202, and methionine 205. Glutamate 196 is a binding site for Mg(2+).

It belongs to the cytochrome c oxidase subunit 2 family. As to quaternary structure, component of the cytochrome c oxidase (complex IV, CIV), a multisubunit enzyme composed of a catalytic core of 3 subunits and several supernumerary subunits. The complex exists as a monomer or a dimer and forms supercomplexes (SCs) in the inner mitochondrial membrane with ubiquinol-cytochrome c oxidoreductase (cytochrome b-c1 complex, complex III, CIII). It depends on Cu cation as a cofactor.

The protein resides in the mitochondrion inner membrane. It carries out the reaction 4 Fe(II)-[cytochrome c] + O2 + 8 H(+)(in) = 4 Fe(III)-[cytochrome c] + 2 H2O + 4 H(+)(out). Component of the cytochrome c oxidase, the last enzyme in the mitochondrial electron transport chain which drives oxidative phosphorylation. The respiratory chain contains 3 multisubunit complexes succinate dehydrogenase (complex II, CII), ubiquinol-cytochrome c oxidoreductase (cytochrome b-c1 complex, complex III, CIII) and cytochrome c oxidase (complex IV, CIV), that cooperate to transfer electrons derived from NADH and succinate to molecular oxygen, creating an electrochemical gradient over the inner membrane that drives transmembrane transport and the ATP synthase. Cytochrome c oxidase is the component of the respiratory chain that catalyzes the reduction of oxygen to water. Electrons originating from reduced cytochrome c in the intermembrane space (IMS) are transferred via the dinuclear copper A center (CU(A)) of subunit 2 and heme A of subunit 1 to the active site in subunit 1, a binuclear center (BNC) formed by heme A3 and copper B (CU(B)). The BNC reduces molecular oxygen to 2 water molecules using 4 electrons from cytochrome c in the IMS and 4 protons from the mitochondrial matrix. The protein is Cytochrome c oxidase subunit 2 (COII) of Apis koschevnikovi (Koschevnikov's honey bee).